A 129-amino-acid chain; its full sequence is UPF0325 protein Ent638_0703 (129 aa).

The protein belongs to the UPF0325 family.

The chain is UPF0325 protein Ent638_0703 from Enterobacter sp. (strain 638).